The primary structure comprises 673 residues: RAS guanyl-releasing protein 4 (673 aa).

Composition is skewed to basic residues over residues 1-10 (MNRKDSKRKS) and 20-32 (GRGR…RHKT). Disordered regions lie at residues 1 to 34 (MNRK…KTCP) and 162 to 188 (QSLG…PGLG). The N-terminal Ras-GEF domain maps to 49-172 (GMLNEGGCSE…SLGDFSSRLS (124 aa)). The region spanning 201 to 432 (ETGELAEHLT…YELSYAREPR (232 aa)) is the Ras-GEF domain. One can recognise an EF-hand domain in the interval 466-501 (HVEQLVESVFKNYDPDGRGTISQEDFERLSGNFPFA). A Phorbol-ester/DAG-type zinc finger spans residues 540–590 (LHTFQEVTFRKPTFCNSCSGFLWGVTKQGYRCRDCGLCCHRHCRDQVKVEC). Disordered stretches follow at residues 593–618 (RPGA…ASCG) and 638–673 (RHAW…KLNS). Residues 603 to 612 (PEAPVPPTPV) are compositionally biased toward pro residues.

Belongs to the RASGRP family.

It is found in the cytoplasm. It localises to the cell membrane. Functionally, functions as a cation- and diacylglycerol (DAG)-regulated nucleotide exchange factor activating Ras through the exchange of bound GDP for GTP. In neutrophils, participates in a phospholipase C-activating N-formyl peptide-activated GPCR (G protein-coupled receptor) signaling pathway by promoting Ras-mediated activation of PIK3CG/PI3Kgamma to promote neutrophil functional responses. In CD117(+) dendritic cells and mast cells, participates in an lipopolysaccharide (LPS)-activated signaling pathway that stimulates the production of interferon-gamma and other pro-inflammatory cytokines by natural killer (NK) cells. May function in mast cell differentiation. Does not appear to be required for the development of B-cells, DC-cells, T-cells, or NK-cells. The protein is RAS guanyl-releasing protein 4 (RASGRP4) of Bos taurus (Bovine).